The following is a 302-amino-acid chain: MKKNRLNLNGVVVINKAKDISSNKVLQQLKYLFNAQKAGHTGTLDPMATGVLPICFGRATKIAQYLLDADKEYIATIRLGIETDSGDAEGEIIAKSINIPELSAEYLEIVLAKFSGDVVQIPPMYSALKYNGQPLYKLAREGKTVEVKSRNIKIYELELLEFNIDSLKIRVKCSKGTYIRSLAIDIGKTLGCGGHLIALQRTQSGPFKLSEAFRLEQLKDLSFEQKIASITNIESVFIDKPIYSLLEEEKNDLYKRGLFADKPHLDGTVRIYDVEKFVAIAEFDKGKLINKKFFDQDILISE.

Asp-45 functions as the Nucleophile in the catalytic mechanism.

This sequence belongs to the pseudouridine synthase TruB family. Type 1 subfamily.

The enzyme catalyses uridine(55) in tRNA = pseudouridine(55) in tRNA. Its function is as follows. Responsible for synthesis of pseudouridine from uracil-55 in the psi GC loop of transfer RNAs. The polypeptide is tRNA pseudouridine synthase B (Francisella tularensis subsp. holarctica (strain FTNF002-00 / FTA)).